Consider the following 526-residue polypeptide: MKQNETFDQEREDLYHTFDEEDEESQTESSVPSTPLSRNRSEDVPVPWPRSYRQSMDLLTGVTPPTSTSFVSSFRQRRQSSVFGSFTSSPSKQQLLIDKDEIQSSVVSSIKSFLASHLQLSVPGDLLTPQENRSCTFSQSVLNGINVLCGVALLTMPYAVKEGGWLGLFILFSFGIITFYTGILLKRCLENSPGIHTYPDIGQAAFGTTGRILVSILLYVELYASCVEYIIMMSDNLSRMFPNTSLYINGFSLDSTQVFAITTTLIVLPTVWLKDLSLLSYLSAGGVISSILLALCLFWAGSVDGVGFHISGQALDITNIPVAIGIYGFGFGSHSVFPNIYSSMKEPSKFPTVLLISFAFCTLFYIAVAVCGFTMFGDAIQSQFTLNMPPHFTSSKIAVWTAVVTPMTKYALTITPVMLSLEELIPSSSRKMRSKGVSMLFRTILVLSTLVVALTVPFFATVAALIGSFIAMLIALIFPCLCYISIMKGRLTNFQIGICILIVIIGIVSGCCGTYSAIARLIGEMT.

The disordered stretch occupies residues 1 to 49 (MKQNETFDQEREDLYHTFDEEDEESQTESSVPSTPLSRNRSEDVPVPWP). Over residues 8–18 (DQEREDLYHTF) the composition is skewed to basic and acidic residues. Transmembrane regions (helical) follow at residues 140–160 (SVLNGINVLCGVALLTMPYAV), 165–185 (WLGLFILFSFGIITFYTGILL), 212–232 (ILVSILLYVELYASCVEYIIM), 253–273 (LDSTQVFAITTTLIVLPTVWL), 278–298 (LLSYLSAGGVISSILLALCLF), 320–340 (IPVAIGIYGFGFGSHSVFPNI), 353–373 (VLLISFAFCTLFYIAVAVCGF), 397–417 (IAVWTAVVTPMTKYALTITPV), 436–456 (GVSMLFRTILVLSTLVVALTV), 458–478 (FFATVAALIGSFIAMLIALIF), and 494–514 (FQIGICILIVIIGIVSGCCGT).

It belongs to the amino acid/polyamine transporter 2 family. Amino acid/auxin permease (AAAP) (TC 2.A.18.5) subfamily.

It is found in the membrane. This is Amino acid transporter AVT1E from Arabidopsis thaliana (Mouse-ear cress).